The chain runs to 276 residues: Formamidopyrimidine-DNA glycosylase (276 aa).

Catalysis depends on proline 2, which acts as the Schiff-base intermediate with DNA. Residue glutamate 3 is the Proton donor of the active site. The active-site Proton donor; for beta-elimination activity is the lysine 60. 2 residues coordinate DNA: arginine 113 and arginine 152. Residues asparagine 241–lysine 275 form an FPG-type zinc finger. Arginine 265 functions as the Proton donor; for delta-elimination activity in the catalytic mechanism.

Belongs to the FPG family. Monomer. Zn(2+) serves as cofactor.

It catalyses the reaction Hydrolysis of DNA containing ring-opened 7-methylguanine residues, releasing 2,6-diamino-4-hydroxy-5-(N-methyl)formamidopyrimidine.. The catalysed reaction is 2'-deoxyribonucleotide-(2'-deoxyribose 5'-phosphate)-2'-deoxyribonucleotide-DNA = a 3'-end 2'-deoxyribonucleotide-(2,3-dehydro-2,3-deoxyribose 5'-phosphate)-DNA + a 5'-end 5'-phospho-2'-deoxyribonucleoside-DNA + H(+). In terms of biological role, involved in base excision repair of DNA damaged by oxidation or by mutagenic agents. Acts as a DNA glycosylase that recognizes and removes damaged bases. Has a preference for oxidized purines, such as 7,8-dihydro-8-oxoguanine (8-oxoG). Has AP (apurinic/apyrimidinic) lyase activity and introduces nicks in the DNA strand. Cleaves the DNA backbone by beta-delta elimination to generate a single-strand break at the site of the removed base with both 3'- and 5'-phosphates. This chain is Formamidopyrimidine-DNA glycosylase, found in Protochlamydia amoebophila (strain UWE25).